A 446-amino-acid chain; its full sequence is Glucose-1-phosphate adenylyltransferase (446 aa).

Residues Y119, G184, 199 to 200, and S217 contribute to the alpha-D-glucose 1-phosphate site; that span reads EK.

The protein belongs to the bacterial/plant glucose-1-phosphate adenylyltransferase family. Homotetramer.

It carries out the reaction alpha-D-glucose 1-phosphate + ATP + H(+) = ADP-alpha-D-glucose + diphosphate. It functions in the pathway glycan biosynthesis; glycogen biosynthesis. Functionally, involved in the biosynthesis of ADP-glucose, a building block required for the elongation reactions to produce glycogen. Catalyzes the reaction between ATP and alpha-D-glucose 1-phosphate (G1P) to produce pyrophosphate and ADP-Glc. The polypeptide is Glucose-1-phosphate adenylyltransferase (Rhodopirellula baltica (strain DSM 10527 / NCIMB 13988 / SH1)).